Here is a 502-residue protein sequence, read N- to C-terminus: Glycerol kinase (502 aa).

Residue Thr-14 coordinates ADP. Thr-14, Thr-15, and Ser-16 together coordinate ATP. Thr-14 serves as a coordination point for sn-glycerol 3-phosphate. ADP is bound at residue Arg-18. Arg-84, Glu-85, and Tyr-136 together coordinate sn-glycerol 3-phosphate. Glycerol is bound by residues Arg-84, Glu-85, and Tyr-136. The residue at position 232 (His-232) is a Phosphohistidine; by HPr. Asp-246 is a binding site for sn-glycerol 3-phosphate. Glycerol-binding residues include Asp-246 and Gln-247. Positions 268 and 311 each coordinate ADP. Positions 268, 311, 315, and 412 each coordinate ATP. Gly-412 and Asn-416 together coordinate ADP.

The protein belongs to the FGGY kinase family. As to quaternary structure, homotetramer and homodimer (in equilibrium). In terms of processing, the phosphoenolpyruvate-dependent sugar phosphotransferase system (PTS), including enzyme I, and histidine-containing protein (HPr) are required for the phosphorylation, which leads to the activation of the enzyme.

It carries out the reaction glycerol + ATP = sn-glycerol 3-phosphate + ADP + H(+). The protein operates within polyol metabolism; glycerol degradation via glycerol kinase pathway; sn-glycerol 3-phosphate from glycerol: step 1/1. Its activity is regulated as follows. Activated by phosphorylation and inhibited by fructose 1,6-bisphosphate (FBP). In terms of biological role, key enzyme in the regulation of glycerol uptake and metabolism. Catalyzes the phosphorylation of glycerol to yield sn-glycerol 3-phosphate. The protein is Glycerol kinase of Streptococcus gordonii (strain Challis / ATCC 35105 / BCRC 15272 / CH1 / DL1 / V288).